A 502-amino-acid polypeptide reads, in one-letter code: Glycerol kinase (502 aa).

Thr16 lines the ADP pocket. ATP contacts are provided by Thr16, Thr17, and Ser18. Residue Thr16 participates in sn-glycerol 3-phosphate binding. Arg20 serves as a coordination point for ADP. Positions 86, 87, 138, and 247 each coordinate sn-glycerol 3-phosphate. 5 residues coordinate glycerol: Arg86, Glu87, Tyr138, Asp247, and Gln248. ADP-binding residues include Thr269 and Gly312. 4 residues coordinate ATP: Thr269, Gly312, Gln316, and Gly413. Residues Gly413 and Asn417 each coordinate ADP.

It belongs to the FGGY kinase family.

It catalyses the reaction glycerol + ATP = sn-glycerol 3-phosphate + ADP + H(+). The protein operates within polyol metabolism; glycerol degradation via glycerol kinase pathway; sn-glycerol 3-phosphate from glycerol: step 1/1. Its activity is regulated as follows. Inhibited by fructose 1,6-bisphosphate (FBP). In terms of biological role, key enzyme in the regulation of glycerol uptake and metabolism. Catalyzes the phosphorylation of glycerol to yield sn-glycerol 3-phosphate. This Dechloromonas aromatica (strain RCB) protein is Glycerol kinase.